Reading from the N-terminus, the 411-residue chain is Putative metal tolerance protein C3 (411 aa).

The Cytoplasmic portion of the chain corresponds to 1-115 (MEVNYCPETP…DRAERAAQEL (115 aa)). Residues 116-136 (AMQISNWANIFLLALKIYATV) form a helical membrane-spanning segment. The Vacuolar portion of the chain corresponds to 137–140 (KSGS). A helical transmembrane segment spans residues 141-161 (IAIAASTLDSLLDLMAGGILW). The Cytoplasmic portion of the chain corresponds to 162–184 (FTHLSMKNVNIYKYPIGKLRVQP). A helical transmembrane segment spans residues 185-205 (VGIIIFAAVMATLGFQVLLVA). Residues 206 to 222 (AEQLISNEPSEKMNHVQ) lie on the Vacuolar side of the membrane. The chain crosses the membrane as a helical span at residues 223 to 243 (LIWLYSIMLSATAIKLVLWIY). Over 244–262 (CKSSRNHIVRAYAKDHHFD) the chain is Cytoplasmic. Residues 263–283 (VVTNVLGLVAAVLANAFYWWL) form a helical membrane-spanning segment. The Vacuolar portion of the chain corresponds to 284–287 (DPTG). A helical membrane pass occupies residues 288–308 (AILLAIYTIVNWSGTVMENAV). The Cytoplasmic segment spans residues 309–390 (SLIGQSAPPE…LPEVERAFVH (82 aa)).

This sequence belongs to the cation diffusion facilitator (CDF) transporter (TC 2.A.4) family.

It is found in the vacuole membrane. In terms of biological role, involved in sequestration of excess metal in the cytoplasm into vacuoles to maintain metal homeostasis. This Arabidopsis thaliana (Mouse-ear cress) protein is Putative metal tolerance protein C3 (MTPC3).